A 380-amino-acid chain; its full sequence is Chaperone protein DnaJ (380 aa).

The region spanning 5–70 (DYYEVLGVER…SKRAAYDQYG (66 aa)) is the J domain. The CR-type zinc-finger motif lies at 139 to 217 (GTTVNIRVPT…CHGEGRVEES (79 aa)). Zn(2+) contacts are provided by cysteine 152, cysteine 155, cysteine 169, cysteine 172, cysteine 191, cysteine 194, cysteine 205, and cysteine 208. CXXCXGXG motif repeat units lie at residues 152-159 (CKPCDGSG), 169-176 (CPTCGGIG), 191-198 (CPRCHGHG), and 205-212 (CDSCHGEG).

The protein belongs to the DnaJ family. As to quaternary structure, homodimer. Zn(2+) is required as a cofactor.

The protein resides in the cytoplasm. Its function is as follows. Participates actively in the response to hyperosmotic and heat shock by preventing the aggregation of stress-denatured proteins and by disaggregating proteins, also in an autonomous, DnaK-independent fashion. Unfolded proteins bind initially to DnaJ; upon interaction with the DnaJ-bound protein, DnaK hydrolyzes its bound ATP, resulting in the formation of a stable complex. GrpE releases ADP from DnaK; ATP binding to DnaK triggers the release of the substrate protein, thus completing the reaction cycle. Several rounds of ATP-dependent interactions between DnaJ, DnaK and GrpE are required for fully efficient folding. Also involved, together with DnaK and GrpE, in the DNA replication of plasmids through activation of initiation proteins. This chain is Chaperone protein DnaJ, found in Pseudomonas syringae pv. tomato (strain ATCC BAA-871 / DC3000).